Consider the following 568-residue polypeptide: Sphingosine-1-phosphate lyase 1 (568 aa).

Over 1 to 40 the chain is Lumenal; it reads MPGTDLLKLKDFEPYLEILESYSTKAKNYVNGYCTKYEPW. The helical; Signal-anchor for type III membrane protein transmembrane segment at 41-61 threads the bilayer; it reads QLIAWSVLCTLLIVWVYELIF. Topologically, residues 62-568 are cytoplasmic; sequence QPESLWSRFK…NQMNGSPKPR (507 aa). N6-(pyridoxal phosphate)lysine; alternate is present on K353. K353 carries the post-translational modification N6-acetyllysine; alternate. 2 positions are modified to 3'-nitrotyrosine: Y356 and Y366. The residue at position 564 (S564) is a Phosphoserine.

It belongs to the group II decarboxylase family. Sphingosine-1-phosphate lyase subfamily. Pyridoxal 5'-phosphate is required as a cofactor. Highest levels are found in liver, small intestine and thymus, followed by kidney, lung, heart, spleen and brain (at protein level). Also detected in stomach, testis and skeletal muscle (at protein level).

Its subcellular location is the endoplasmic reticulum membrane. The enzyme catalyses sphinganine 1-phosphate = hexadecanal + phosphoethanolamine. It carries out the reaction sphing-4-enine 1-phosphate = (2E)-hexadecenal + phosphoethanolamine. The protein operates within lipid metabolism; sphingolipid metabolism. Its function is as follows. Cleaves phosphorylated sphingoid bases (PSBs), such as sphingosine-1-phosphate, into fatty aldehydes and phosphoethanolamine. Elevates stress-induced ceramide production and apoptosis. Required for global lipid homeostasis in liver and cholesterol homeostasis in fibroblasts. Involved in the regulation of pro-inflammatory response and neutrophil trafficking. Modulates neuronal autophagy via phosphoethanolamine production which regulates accumulation of aggregate-prone proteins such as APP. Seems to play a role in establishing neuronal contact sites and axonal maintenance. The polypeptide is Sphingosine-1-phosphate lyase 1 (Mus musculus (Mouse)).